The following is a 901-amino-acid chain: Protein translocase subunit SecA (901 aa).

ATP-binding positions include Gln-87, 105–109 (GEGKT), and Asp-512. The disordered stretch occupies residues 859–901 (HQDDDSAAAAALAAQTGERKVGRNDPCPCGSGKKYKQCHGRLQ). Residues Cys-885, Cys-887, Cys-896, and His-897 each contribute to the Zn(2+) site. The segment covering 891 to 901 (KKYKQCHGRLQ) has biased composition (basic residues).

It belongs to the SecA family. Monomer and homodimer. Part of the essential Sec protein translocation apparatus which comprises SecA, SecYEG and auxiliary proteins SecDF-YajC and YidC. Zn(2+) is required as a cofactor.

It is found in the cell inner membrane. The protein resides in the cytoplasm. The enzyme catalyses ATP + H2O + cellular proteinSide 1 = ADP + phosphate + cellular proteinSide 2.. Its function is as follows. Part of the Sec protein translocase complex. Interacts with the SecYEG preprotein conducting channel. Has a central role in coupling the hydrolysis of ATP to the transfer of proteins into and across the cell membrane, serving both as a receptor for the preprotein-SecB complex and as an ATP-driven molecular motor driving the stepwise translocation of polypeptide chains across the membrane. In Escherichia coli O127:H6 (strain E2348/69 / EPEC), this protein is Protein translocase subunit SecA.